The sequence spans 613 residues: MTSLLFAFSLFLSFSVGSIFPFSTSNGPAVNDTLQNAIRSQRDVSKPIPIDRVGFSGVSLSSFFESEGYSSDSLSNLNGLLKENVDGVMIDLYWNEFTSKWQLCPAPFPNNITYTTASNRIVDVSWNNKTYKCDPNLSTDNIMSILNSFIRDTNTDVEANFMHVMYNLKSIHYEKSNQTISLENIYKEKNSNLNVVGMDTLNDTVSLLSSYIFTPTLLKQYQSTSNKYTNSSSSIRYIDSLNETQAIQDFYSQSTILMPSLQTVLLTQYKRLMVHVVTNDMAESSRSYQISSSDKDTIFFNSDLPASIFHTDNASADELCYELSDAYNRTDVNIAEFNKVSLNATLRLVVDDDKTPFTTKSLSKYVRCGYCPIFNSTEYSSQKVTEGNSSIISREFASNLFWSWAPGQPSGPDNCINCTRPTTNNTSKHSDDNGEEEEGNNIAYKCVALTEEGWEVSNCYEKYLFACQNKLSRNEWKLNNSTKRNYFDIDDDDCPEGYFFSLPRSNIEMLSLMTTVKQENVNYPIWIDLNDITVENCFVSGGPYAQCPYQETVTTDKFVRMIAPSFVVAMVVLVLIFIEKVFRKTPIQTNRKRYWKKAIQEYYAKNDYEGVPS.

Residues 1 to 17 (MTSLLFAFSLFLSFSVG) form the signal peptide. At 18-557 (SIFPFSTSNG…PYQETVTTDK (540 aa)) the chain is on the extracellular side. N-linked (GlcNAc...) asparagine glycans are attached at residues Asn31, Asn111, Asn128, Asn136, Asn177, Asn202, Asn230, Asn242, Asn313, Asn328, Asn343, Asn375, Asn388, Asn417, Asn424, Asn425, Asn479, and Asn480. A helical transmembrane segment spans residues 558–578 (FVRMIAPSFVVAMVVLVLIFI). At 579-613 (EKVFRKTPIQTNRKRYWKKAIQEYYAKNDYEGVPS) the chain is on the cytoplasmic side.

This sequence belongs to the MTC6 family.

The protein resides in the membrane. In terms of biological role, may be involved in telomere capping. In Candida albicans (strain WO-1) (Yeast), this protein is Maintenance of telomere capping protein 6 (MTC6).